A 248-amino-acid polypeptide reads, in one-letter code: Probable transcriptional regulatory protein FTW_1073 (248 aa).

It belongs to the TACO1 family.

The protein resides in the cytoplasm. The protein is Probable transcriptional regulatory protein FTW_1073 of Francisella tularensis subsp. tularensis (strain WY96-3418).